A 75-amino-acid chain; its full sequence is Small ribosomal subunit protein bS18 (75 aa).

It belongs to the bacterial ribosomal protein bS18 family. In terms of assembly, part of the 30S ribosomal subunit. Forms a tight heterodimer with protein bS6.

Its function is as follows. Binds as a heterodimer with protein bS6 to the central domain of the 16S rRNA, where it helps stabilize the platform of the 30S subunit. The protein is Small ribosomal subunit protein bS18 of Legionella pneumophila (strain Paris).